Reading from the N-terminus, the 322-residue chain is tRNA dimethylallyltransferase (322 aa).

Residue 19 to 26 coordinates ATP; that stretch reads GPTASGKT. 21–26 lines the substrate pocket; that stretch reads TASGKT. 3 interaction with substrate tRNA regions span residues 44 to 47, 168 to 172, and 255 to 260; these read DSAL, QRIQR, and RCVGYR.

Belongs to the IPP transferase family. As to quaternary structure, monomer. Mg(2+) is required as a cofactor.

It carries out the reaction adenosine(37) in tRNA + dimethylallyl diphosphate = N(6)-dimethylallyladenosine(37) in tRNA + diphosphate. Its function is as follows. Catalyzes the transfer of a dimethylallyl group onto the adenine at position 37 in tRNAs that read codons beginning with uridine, leading to the formation of N6-(dimethylallyl)adenosine (i(6)A). This chain is tRNA dimethylallyltransferase, found in Cupriavidus taiwanensis (strain DSM 17343 / BCRC 17206 / CCUG 44338 / CIP 107171 / LMG 19424 / R1) (Ralstonia taiwanensis (strain LMG 19424)).